Here is an 837-residue protein sequence, read N- to C-terminus: Tuftelin-interacting protein 11 (837 aa).

2 stretches are compositionally biased toward basic and acidic residues: residues 1-13 and 53-64; these read MSLS…GEGR and VWAERDSDDERP. 3 disordered regions span residues 1 to 21, 53 to 72, and 85 to 133; these read MSLS…DDER, VWAE…KRAR, and LKKG…KGFA. Residues 1 to 50 are required for interaction with DHX15; the sequence is MSLSHLYRDGEGRIDDDDDERENFEITDWDLQNEFNPNRQRHWQTKEEAT. Phosphoserine is present on residues Ser-2, Ser-59, and Ser-98. The segment covering 91–102 has biased composition (acidic residues); sequence EEAELEDSDDEE. Basic and acidic residues predominate over residues 103–116; the sequence is RPVKQDDFPKDFGP. The residue at position 144 (Ser-144) is a Phosphoserine. The G-patch domain maps to 149–195; sequence TKGIGQKLLQKMGYVPGRGLGKNAQGIINPIEAKQRKGKGAVGAYGS. The disordered stretch occupies residues 179 to 236; that stretch reads IEAKQRKGKGAVGAYGSERTTQSMQDFPVVDSEEEAEEEFQKELSQWRKDPSGSKKKP. Ser-210 bears the Phosphoserine mark. Residues 217–231 show a composition bias toward basic and acidic residues; that stretch reads EFQKELSQWRKDPSG. The Nuclear localization signal signature appears at 700-705; it reads VKDKFN. A required for nuclear speckle localization region spans residues 710 to 734; the sequence is IMNRAVSSNVGAYMQPGARENIAYL.

This sequence belongs to the TFP11/STIP family. As to quaternary structure, identified in the spliceosome C complex. Found in the Intron Large (IL) complex, a post-mRNA release spliceosomal complex containing the excised intron, U2, U5 and U6 snRNPs, and splicing factors. Interacts with TUFT1. Interacts with DHX15; indicative for a recruitment of DHX15 to the IL complex. Interacts with GCFC2.

It is found in the cytoplasm. The protein localises to the nucleus. In terms of biological role, involved in pre-mRNA splicing, specifically in spliceosome disassembly during late-stage splicing events. Intron turnover seems to proceed through reactions in two lariat-intron associated complexes termed Intron Large (IL) and Intron Small (IS). In cooperation with DHX15 seems to mediate the transition of the U2, U5 and U6 snRNP-containing IL complex to the snRNP-free IS complex leading to efficient debranching and turnover of excised introns. May play a role in the differentiation of ameloblasts and odontoblasts or in the forming of the enamel extracellular matrix. This chain is Tuftelin-interacting protein 11 (TFIP11), found in Macaca mulatta (Rhesus macaque).